A 149-amino-acid chain; its full sequence is Large ribosomal subunit protein bL20m (149 aa).

A mitochondrion-targeting transit peptide spans 1-9 (MVFLSLSRW).

The protein belongs to the bacterial ribosomal protein bL20 family. Component of the mitochondrial ribosome large subunit (39S) which comprises a 16S rRNA and about 50 distinct proteins.

The protein resides in the mitochondrion. The sequence is that of Large ribosomal subunit protein bL20m (mrpl20) from Xenopus laevis (African clawed frog).